Reading from the N-terminus, the 427-residue chain is UPF0597 protein FN1147 (427 aa).

It belongs to the UPF0597 family.

The polypeptide is UPF0597 protein FN1147 (Fusobacterium nucleatum subsp. nucleatum (strain ATCC 25586 / DSM 15643 / BCRC 10681 / CIP 101130 / JCM 8532 / KCTC 2640 / LMG 13131 / VPI 4355)).